A 186-amino-acid polypeptide reads, in one-letter code: Ion-translocating oxidoreductase complex subunit B (186 aa).

The interval 1–23 is hydrophobic; sequence MLTPILALTALALIAGALLGFAA. Positions 29–88 constitute a 4Fe-4S domain; that stretch reads EGNPIADQVDAVLPQTQCGQCGFGGCRPYAEAIAAGEAEINRCPPGGQDTVQTLADLLGV. [4Fe-4S] cluster-binding residues include Cys46, Cys49, Cys54, Cys71, Cys114, Cys117, Cys120, Cys124, Cys144, Cys147, Cys150, and Cys154. 2 4Fe-4S ferredoxin-type domains span residues 105 to 134 and 135 to 164; these read QVAW…GAAK and QMHT…MVPV.

Belongs to the 4Fe4S bacterial-type ferredoxin family. RnfB subfamily. The complex is composed of six subunits: RnfA, RnfB, RnfC, RnfD, RnfE and RnfG. Requires [4Fe-4S] cluster as cofactor.

It localises to the cell inner membrane. Its function is as follows. Part of a membrane-bound complex that couples electron transfer with translocation of ions across the membrane. The polypeptide is Ion-translocating oxidoreductase complex subunit B (Alkalilimnicola ehrlichii (strain ATCC BAA-1101 / DSM 17681 / MLHE-1)).